The primary structure comprises 190 residues: Probable RNA-binding protein 18 (190 aa).

An RRM domain is found at 25–106 (HRLWIGNVDP…KKLVVRWAHA (82 aa)).

In Xenopus laevis (African clawed frog), this protein is Probable RNA-binding protein 18 (rbm18).